The following is a 136-amino-acid chain: Small ribosomal subunit protein uS11c (136 aa).

Belongs to the universal ribosomal protein uS11 family. As to quaternary structure, part of the 30S ribosomal subunit.

The protein localises to the plastid. Its subcellular location is the chloroplast. This chain is Small ribosomal subunit protein uS11c, found in Helianthus annuus (Common sunflower).